We begin with the raw amino-acid sequence, 473 residues long: Ribulose bisphosphate carboxylase large chain 1 (473 aa).

2 residues coordinate substrate: Asn-116 and Thr-166. Residue Lys-168 is the Proton acceptor of the active site. Position 170 (Lys-170) interacts with substrate. Residues Lys-194, Asp-196, and Glu-197 each coordinate Mg(2+). Lys-194 is modified (N6-carboxylysine). Catalysis depends on His-287, which acts as the Proton acceptor. Substrate contacts are provided by Arg-288, His-320, and Ser-372.

The protein belongs to the RuBisCO large chain family. Type I subfamily. Heterohexadecamer of 8 large chains and 8 small chains. It depends on Mg(2+) as a cofactor.

It carries out the reaction 2 (2R)-3-phosphoglycerate + 2 H(+) = D-ribulose 1,5-bisphosphate + CO2 + H2O. The catalysed reaction is D-ribulose 1,5-bisphosphate + O2 = 2-phosphoglycolate + (2R)-3-phosphoglycerate + 2 H(+). Its function is as follows. RuBisCO catalyzes two reactions: the carboxylation of D-ribulose 1,5-bisphosphate, the primary event in carbon dioxide fixation, as well as the oxidative fragmentation of the pentose substrate. Both reactions occur simultaneously and in competition at the same active site. This Acidithiobacillus ferrooxidans (Thiobacillus ferrooxidans) protein is Ribulose bisphosphate carboxylase large chain 1.